The primary structure comprises 132 residues: Small ribosomal subunit protein uS8 (132 aa).

It belongs to the universal ribosomal protein uS8 family. Part of the 30S ribosomal subunit. Contacts proteins S5 and S12.

In terms of biological role, one of the primary rRNA binding proteins, it binds directly to 16S rRNA central domain where it helps coordinate assembly of the platform of the 30S subunit. The protein is Small ribosomal subunit protein uS8 of Streptococcus pneumoniae serotype 19F (strain G54).